The chain runs to 224 residues: Ornithine decarboxylase antizyme (224 aa).

Belongs to the ODC antizyme family. As to quaternary structure, interacts with ODC and thereby sterically blocks ODC homodimerization.

Its function is as follows. Ornithine decarboxylase (ODC) antizyme protein that negatively regulates ODC activity and intracellular polyamine biosynthesis in response to increased intracellular polyamine levels. Binds to ODC monomers, inhibiting the assembly of the functional ODC homodimer, and targets the monomers for ubiquitin-independent proteolytic destruction by the 26S proteasome. This chain is Ornithine decarboxylase antizyme (spa1), found in Schizosaccharomyces octosporus (Fission yeast).